The sequence spans 1099 residues: R3H domain-containing protein 1 (1099 aa).

The segment at 111-146 (SFEKEEKPSKDEAEKEKASDKLPRKMLSRDSSQEYT) is disordered. Over residues 112 to 142 (FEKEEKPSKDEAEKEKASDKLPRKMLSRDSS) the composition is skewed to basic and acidic residues. Positions 168-231 (RMMLLKLEQE…SVIVNKTSNT (64 aa)) constitute an R3H domain. Phosphoserine is present on residues Ser187 and Ser262. An SUZ domain is found at 232–302 (RIPDQKFNEH…ARDRIFSQDS (71 aa)). The tract at residues 267–287 (DNQMRIRLKDDRRSKSIEERE) is disordered. Ser302 is modified (phosphoserine). The segment at 331-370 (RVNKDASGRSTNSHQSSTENELKYSEPRPWSSTDSDSSLR) is disordered. Polar residues-rich tracts occupy residues 338 to 349 (GRSTNSHQSSTE) and 360 to 370 (WSSTDSDSSLR). 3 positions are modified to phosphoserine: Ser380, Ser381, and Ser393. 4 disordered regions span residues 387–439 (VLTR…SSHG), 490–537 (QTGQ…AANH), 583–625 (YIMT…HPVS), and 797–825 (EQVQ…PPPP). Residues 391–422 (GDSSGSSKSIGRLSKTGSESSGSVGSSTGSLS) are compositionally biased toward low complexity. 2 stretches are compositionally biased toward pro residues: residues 519-532 (PGPP…PPQQ) and 588-611 (APPP…PGQP). The segment covering 797-817 (EQVQFPRTTSPCSSQQLQGHQ) has biased composition (polar residues). Position 929 is an asymmetric dimethylarginine; alternate (Arg929). At Arg929 the chain carries Omega-N-methylarginine; alternate. A disordered region spans residues 941–977 (PPAVLHGHIPNQQGQPGSRHGNRGRRQAKKAASTDLG). Residues 960-969 (HGNRGRRQAK) show a composition bias toward basic residues. Ser973 bears the Phosphoserine mark.

In Homo sapiens (Human), this protein is R3H domain-containing protein 1 (R3HDM1).